Here is a 147-residue protein sequence, read N- to C-terminus: Large ribosomal subunit protein uL11 (147 aa).

Belongs to the universal ribosomal protein uL11 family. Part of the ribosomal stalk of the 50S ribosomal subunit. Interacts with L10 and the large rRNA to form the base of the stalk. L10 forms an elongated spine to which L12 dimers bind in a sequential fashion forming a multimeric L10(L12)X complex. One or more lysine residues are methylated.

In terms of biological role, forms part of the ribosomal stalk which helps the ribosome interact with GTP-bound translation factors. This Bacteroides fragilis (strain ATCC 25285 / DSM 2151 / CCUG 4856 / JCM 11019 / LMG 10263 / NCTC 9343 / Onslow / VPI 2553 / EN-2) protein is Large ribosomal subunit protein uL11.